Consider the following 309-residue polypeptide: Syndecan-1 (309 aa).

The signal sequence occupies residues 1–22 (MRRAALWLWLCALALRLQPVLP). Topologically, residues 24 to 253 (IMAVNVPPED…GLLDRKEVLG (230 aa)) are extracellular. 2 disordered regions span residues 28-57 (NVPPEDQDGSGDDSDNFSGSGTGALPDITL) and 142-185 (ARAT…GGTS). Acidic residues predominate over residues 32-42 (EDQDGSGDDSD). A glycan (O-linked (Xyl...) (chondroitin sulfate) serine) is linked at Ser37. Asn43 carries an N-linked (GlcNAc...) asparagine glycan. Ser45 and Ser47 each carry an O-linked (Xyl...) (heparan sulfate) serine glycan. The span at 142-151 (ARATTAQAPV) shows a compositional bias: polar residues. Ser205 and Ser215 each carry an O-linked (Xyl...) (chondroitin sulfate) serine glycan. The helical transmembrane segment at 254–274 (GVIAGGLVGLIFAVCLVGFML) threads the bilayer. Residues 275-309 (YRMKKKDEGSYSLEEPKQANGGAYQKPTKQEEFYA) lie on the Cytoplasmic side of the membrane. The disordered stretch occupies residues 283-309 (GSYSLEEPKQANGGAYQKPTKQEEFYA). Ser284 is subject to Phosphoserine.

The protein belongs to the syndecan proteoglycan family. In terms of assembly, interacts with CDCP1. Interacts (via C-terminus) with TIAM1 (via PDZ domain). Interacts with MDK. Post-translationally, shedding is enhanced by a number of factors such as heparanase, thrombin or EGF. Also by stress and wound healing. PMA-mediated shedding is inhibited by TIMP3.

It is found in the membrane. Its subcellular location is the secreted. It localises to the extracellular exosome. Its function is as follows. Cell surface proteoglycan that contains both heparan sulfate and chondroitin sulfate and that links the cytoskeleton to the interstitial matrix. Regulates exosome biogenesis in concert with SDCBP and PDCD6IP. Able to induce its own expression in dental mesenchymal cells and also in the neighboring dental epithelial cells via an MSX1-mediated pathway. This Cricetulus griseus (Chinese hamster) protein is Syndecan-1.